A 738-amino-acid polypeptide reads, in one-letter code: Platelet endothelial cell adhesion molecule (738 aa).

Residues 1 to 27 (MQPRWAQGATMWLGVLLTLLLCSSLEG) form the signal peptide. Residues 28-601 (QENSFTINSV…VRVILAPWKK (574 aa)) lie on the Extracellular side of the membrane. Ig-like C2-type domains are found at residues 35–121 (NSVD…KTTA), 145–233 (GGIV…TESF), and 236–315 (PKFH…SKVS). Residues Asn-52, Asn-84, and Asn-151 are each glycosylated (N-linked (GlcNAc...) asparagine). Residues Cys-57 and Cys-109 are joined by a disulfide bond. 2 disulfides stabilise this stretch: Cys-152–Cys-206 and Cys-256–Cys-304. N-linked (GlcNAc...) asparagine glycans are attached at residues Asn-301, Asn-320, Asn-344, Asn-356, Asn-453, and Asn-551. Ig-like C2-type domains lie at 328-401 (PELE…NTVQ), 424-493 (GQTI…EVLR), and 499-591 (PVDE…KILT). 3 disulfides stabilise this stretch: Cys-347-Cys-386, Cys-431-Cys-476, and Cys-523-Cys-572. The helical transmembrane segment at 602–620 (GLIAVVIIGVIIALLIIAA) threads the bilayer. Topologically, residues 621 to 738 (KCYFLRKAKA…SRTEGSLDGT (118 aa)) are cytoplasmic. Cys-622 carries the S-palmitoyl cysteine lipid modification. Residues 658-715 (EANSHYGHNDDVRNHAMKPINDNKEPLNSDVQYTEVQVSSAESHKDLGKKDTETVYSE) form a disordered region. A compositionally biased stretch (polar residues) spans 686–698 (SDVQYTEVQVSSA). 2 short sequence motifs (ITIM motif) span residues 688-693 (VQYTEV) and 711-716 (TVYSEV). Phosphotyrosine; by FER is present on residues Tyr-690 and Tyr-713. Residues 699 to 715 (ESHKDLGKKDTETVYSE) are compositionally biased toward basic and acidic residues. Positions 709 to 729 (TETVYSEVRKAVPDAVESRYS) are membrane-bound segment which detaches upon phosphorylation. The tract at residues 721–738 (PDAVESRYSRTEGSLDGT) is may play a role in cytoprotective signaling. Residues Ser-729 and Ser-734 each carry the phosphoserine modification.

Trans-homodimer (via Ig-like C2-type 1 and Ig-like C2-type 2 domains); trans-homodimerization is required for cell-cell interaction. Forms a complex with BDKRB2 and GNAQ. Interacts with BDKRB2 and GNAQ. Interacts with PTPN11; Tyr-713 is critical for PTPN11 recruitment. Interacts with FER. Interacts (via Ig-like C2-type domain 6) with CD177; the interaction is Ca(2+)-dependent; the interaction is direct. Phosphorylated on Ser and Tyr residues after cellular activation by src kinases. Upon activation, phosphorylated on Ser-729 which probably initiates the dissociation of the membrane-interaction segment (residues 709-729) from the cell membrane allowing the sequential phosphorylation of Tyr-713 and Tyr-690. Constitutively phosphorylated on Ser-734 in resting platelets. Phosphorylated on tyrosine residues by FER and FES in response to FCER1 activation. In endothelial cells Fyn mediates mechanical-force (stretch or pull) induced tyrosine phosphorylation. In terms of processing, palmitoylation by ZDHHC21 is necessary for cell surface expression in endothelial cells and enrichment in membrane rafts. In terms of tissue distribution, expressed on platelets and leukocytes and is primarily concentrated at the borders between endothelial cells. Expressed in human umbilical vein endothelial cells (HUVECs) (at protein level). Expressed on neutrophils (at protein level). Isoform Long predominates in all tissues examined. Isoform Delta12 is detected only in trachea. Isoform Delta14-15 is only detected in lung. Isoform Delta14 is detected in all tissues examined with the strongest expression in heart. Isoform Delta15 is expressed in brain, testis, ovary, cell surface of platelets, human umbilical vein endothelial cells (HUVECs), Jurkat T-cell leukemia, human erythroleukemia (HEL) and U-937 histiocytic lymphoma cell lines (at protein level).

It localises to the cell membrane. The protein localises to the membrane raft. Its subcellular location is the cell junction. Cell adhesion molecule which is required for leukocyte transendothelial migration (TEM) under most inflammatory conditions. Tyr-690 plays a critical role in TEM and is required for efficient trafficking of PECAM1 to and from the lateral border recycling compartment (LBRC) and is also essential for the LBRC membrane to be targeted around migrating leukocytes. Trans-homophilic interaction may play a role in endothelial cell-cell adhesion via cell junctions. Heterophilic interaction with CD177 plays a role in transendothelial migration of neutrophils. Homophilic ligation of PECAM1 prevents macrophage-mediated phagocytosis of neighboring viable leukocytes by transmitting a detachment signal. Promotes macrophage-mediated phagocytosis of apoptotic leukocytes by tethering them to the phagocytic cells; PECAM1-mediated detachment signal appears to be disabled in apoptotic leukocytes. Modulates bradykinin receptor BDKRB2 activation. Regulates bradykinin- and hyperosmotic shock-induced ERK1/2 activation in endothelial cells. Induces susceptibility to atherosclerosis. In terms of biological role, does not protect against apoptosis. In Homo sapiens (Human), this protein is Platelet endothelial cell adhesion molecule (PECAM1).